Here is a 176-residue protein sequence, read N- to C-terminus: NAD(P)H-quinone oxidoreductase subunit 6, chloroplastic (176 aa).

Transmembrane regions (helical) follow at residues 10–30 (FLLV…VLLP), 32–52 (PIYS…FYIL), 61–81 (AQLL…VMFM), 92–112 (LWTV…VSLI), and 152–172 (FFLP…GAIT).

This sequence belongs to the complex I subunit 6 family. As to quaternary structure, NDH is composed of at least 16 different subunits, 5 of which are encoded in the nucleus.

The protein localises to the plastid. It is found in the chloroplast thylakoid membrane. The catalysed reaction is a plastoquinone + NADH + (n+1) H(+)(in) = a plastoquinol + NAD(+) + n H(+)(out). It carries out the reaction a plastoquinone + NADPH + (n+1) H(+)(in) = a plastoquinol + NADP(+) + n H(+)(out). Functionally, NDH shuttles electrons from NAD(P)H:plastoquinone, via FMN and iron-sulfur (Fe-S) centers, to quinones in the photosynthetic chain and possibly in a chloroplast respiratory chain. The immediate electron acceptor for the enzyme in this species is believed to be plastoquinone. Couples the redox reaction to proton translocation, and thus conserves the redox energy in a proton gradient. The sequence is that of NAD(P)H-quinone oxidoreductase subunit 6, chloroplastic (ndhG) from Daucus carota (Wild carrot).